The following is a 327-amino-acid chain: 3' cyclic ADP-D-ribose synthase AaTIR (327 aa).

The tract at residues 10–120 (VALSFAGENR…GILKTIGYIN (111 aa)) is TIR domain. Lysine 229 is an active-site residue.

Homodimer.

It carries out the reaction NADP(+) + H2O = ADP-D-ribose 2'-phosphate + nicotinamide + H(+). It catalyses the reaction NAD(+) = 3'cADPR + nicotinamide + H(+). Its function is as follows. NAD(+) hydrolase (NADase) that generates 3'cADPR, a cyclization variant of cyclic ADP-D-ribose (also called v2-cADPR). Also cleaves NADP(+), but does not cyclize the product. The protein is 3' cyclic ADP-D-ribose synthase AaTIR of Aquimarina amphilecti.